Reading from the N-terminus, the 343-residue chain is Vancomycin/teicoplanin A-type resistance protein VanA (343 aa).

Residues Lys-133, 169–171 (FVK), 177–178 (SS), 207–214 (EQAVSGCE), and Phe-241 each bind ATP. In terms of domain architecture, ATP-grasp spans 137-338 (YIVAKNAGIA…LPELIDRLIV (202 aa)). His-244 is a binding site for substrate. 304 to 305 (NE) is a binding site for ATP. Mg(2+) is bound by residues Glu-305 and Asn-307.

It belongs to the D-alanine--D-alanine ligase family. The cofactor is Mg(2+). It depends on Mn(2+) as a cofactor.

It localises to the cell membrane. It catalyses the reaction (R)-lactate + D-alanine + ATP = D-alanyl-(R)-lactate + ADP + phosphate. Functionally, required for high-level resistance to glycopeptide antibiotics. D-Ala--D-Ala ligase of altered specificity which catalyzes ester bond formation between D-Ala and various D-hydroxy acids; produces a peptidoglycan which does not terminate in D-alanine but in D-lactate, thus preventing vancomycin or teicoplanin binding. The chain is Vancomycin/teicoplanin A-type resistance protein VanA (vanA) from Enterococcus faecium (Streptococcus faecium).